The primary structure comprises 606 residues: MNLFTSFVLLTLLILFTPIMVSNTDPHKNNKYQSYVKNIVFCAFITSLIPAMMYLHTNQETLISNWHWITIQTLKLTLSFKMDYFSLMFMPVALFITWSIMEFSMWYMHSDPYINQFFKYLLLFLITMLILVTANNLFQLFIGWEGVGIMSFLLIGWWFGRTDANTAALQAILYNRIGDIGLLASMAWFLSNMNTWDLQQIFMLNQNPLNFPLMGLVLAAAGKSAQFGLHPWLPSAMEGPTPVSALLHSSTMVVAGIFLLVRFYPLMENNKLIQTVTLCLGAITTLFTAICALTQNDIKKIIAFSTSSQLGLMMVTIGLNQPYLAFLHICTHAFFKAMLFLCSGSIIHNLNNEQDIRKMGGLFKALPFTTTALIIGCLALTGMPFLTGFYSKDPIIEAATSSYTNAWALLLTLTATSLTAVYSTRIIFFALLGQPRFPPSTTINENNPLLINPIKRLLIGSIFAGFILSNSIPPVITPLMTMPLHLKLTALTMTTLGFIIAFEINLDTQNLKYTHPSNPFKFSTLLGYFPTIMHRLPPHLDLSMSQKLATSLLDLTWLETTLPKTTALIQLKASTLTSNQQGLIKLYFLSFLITITLSMILFNCPE.

16 consecutive transmembrane segments (helical) span residues 1 to 21 (MNLF…PIMV), 35 to 55 (YVKN…MMYL), 87 to 107 (LMFM…SMWY), 114 to 134 (INQF…LVTA), 140 to 160 (LFIG…WWFG), 171 to 191 (AILY…WFLS), 211 to 233 (FPLM…HPWL), 241 to 261 (TPVS…FLLV), 272 to 292 (LIQT…AICA), 301 to 320 (IIAF…IGLN), 325 to 347 (AFLH…GSII), 366 to 386 (LPFT…MPFL), 413 to 433 (LTAT…ALLG), 457 to 477 (LLIG…PVIT), 482 to 502 (MPLH…IIAF), and 582 to 602 (GLIK…MILF).

This sequence belongs to the complex I subunit 5 family. As to quaternary structure, core subunit of respiratory chain NADH dehydrogenase (Complex I) which is composed of 45 different subunits.

The protein resides in the mitochondrion inner membrane. It carries out the reaction a ubiquinone + NADH + 5 H(+)(in) = a ubiquinol + NAD(+) + 4 H(+)(out). In terms of biological role, core subunit of the mitochondrial membrane respiratory chain NADH dehydrogenase (Complex I) which catalyzes electron transfer from NADH through the respiratory chain, using ubiquinone as an electron acceptor. Essential for the catalytic activity and assembly of complex I. The chain is NADH-ubiquinone oxidoreductase chain 5 (MT-ND5) from Balaenoptera musculus (Blue whale).